We begin with the raw amino-acid sequence, 112 residues long: cAMP-regulated phosphoprotein 19 (112 aa).

At Met-1 the chain carries N-acetylmethionine. Low complexity predominate over residues 1-11 (MSAEVPEAASA). The disordered stretch occupies residues 1-49 (MSAEVPEAASAEEQKEMEDKVTSPEKAEEAKLKARYPHLGQKPGGSDFL). Residue Ser-2 is modified to N-acetylserine. Residues Ser-2 and Ser-23 each carry the phosphoserine modification. A compositionally biased stretch (basic and acidic residues) spans 12–32 (EEQKEMEDKVTSPEKAEEAKL). Ser-62 and Ser-104 each carry phosphoserine; by GWL. Residues 72 to 112 (MKNKQLPTATPDKTEVTGDHIPTPQDLPQRKPSLVASKLAG) form a disordered region. At Ser-104 the chain carries Phosphoserine; by PKA. Lys-109 is subject to N6-acetyllysine.

In terms of assembly, interacts (when phosphorylated at Ser-62) with PPP2R2D. Interacts with SNCA. Interacts with PPP2R2A; the interaction is direct and this interaction inhibits PP2A activity. Post-translationally, phosphorylation at Ser-62 by MASTL/GWL during mitosis is essential for interaction with PPP2R2D (PR55-delta) and subsequent inactivation of PP2A. Phosphorylated by PKA. Isoform ARPP-19 is found in all brain regions and also present in non-neuronal tissues. Isoform ARPP-16 is enriched in the caudate nucleus, found in low levels in cerebral cortex.

The protein resides in the cytoplasm. Protein phosphatase inhibitor that specifically inhibits protein phosphatase 2A (PP2A) during mitosis. Inhibition of PP2A is enhanced when ARPP19 is phosphorylated. When phosphorylated at Ser-62 during mitosis, specifically interacts with PPP2R2D (PR55-delta) and inhibits its activity, leading to inactivation of PP2A, an essential condition to keep cyclin-B1-CDK1 activity high during M phase. May indirectly enhance GAP-43 expression. This Bos taurus (Bovine) protein is cAMP-regulated phosphoprotein 19 (ARPP19).